A 253-amino-acid polypeptide reads, in one-letter code: Isoprenyl transferase (253 aa).

Aspartate 32 is a catalytic residue. Residue aspartate 32 participates in Mg(2+) binding. Substrate is bound by residues 33–36 (GNGR), tryptophan 37, arginine 45, histidine 49, and 77–79 (STE). Asparagine 80 acts as the Proton acceptor in catalysis. Residues tryptophan 81, arginine 83, arginine 200, and 206 to 208 (RLS) contribute to the substrate site. Mg(2+) is bound at residue glutamate 219.

Belongs to the UPP synthase family. In terms of assembly, homodimer. The cofactor is Mg(2+).

In terms of biological role, catalyzes the condensation of isopentenyl diphosphate (IPP) with allylic pyrophosphates generating different type of terpenoids. The polypeptide is Isoprenyl transferase (Clostridium perfringens (strain 13 / Type A)).